The sequence spans 467 residues: Probable circularly permuted 1,3-beta-glucanase TOS1 (467 aa).

The first 21 residues, 1-21 (MKFSSTTLLAGLSSLTATVSA), serve as a signal peptide directing secretion. Positions 158 to 172 (PAVSSAAADDNANSG) are enriched in low complexity. Disordered regions lie at residues 158–187 (PAVS…GYGS) and 200–223 (SDIS…TASV). Over residues 173–185 (SGSGSSAGSGSGY) the composition is skewed to gly residues. Positions 203-222 (STKSAPTSTSAQPSSSETAS) are enriched in low complexity. Residues 374 to 379 (ELDLFE) carry the ExDxxE motif motif. Positions 391–413 (HLHDGQGSSQNSNNGGGGSQDYF) are disordered.

It belongs to the PGA52 family. Cleaved by KEX2 in vitro.

The protein resides in the secreted. The catalysed reaction is Hydrolysis of (1-&gt;3)-beta-D-glucosidic linkages in (1-&gt;3)-beta-D-glucans.. Probable circularly permuted 1,3-beta-glucanase involved in cell wall modification through beta-1,3-glucan network alterations such as increased branching or remodeling. Plays a role in engulfment by host macrophages. The chain is Probable circularly permuted 1,3-beta-glucanase TOS1 from Candida albicans (strain SC5314 / ATCC MYA-2876) (Yeast).